The primary structure comprises 200 residues: ATP-dependent Clp protease proteolytic subunit 2 (200 aa).

The Nucleophile role is filled by S100.

Belongs to the peptidase S14 family. As to quaternary structure, fourteen ClpP subunits assemble into 2 heptameric rings which stack back to back to give a disk-like structure with a central cavity, resembling the structure of eukaryotic proteasomes.

It is found in the cytoplasm. The enzyme catalyses Hydrolysis of proteins to small peptides in the presence of ATP and magnesium. alpha-casein is the usual test substrate. In the absence of ATP, only oligopeptides shorter than five residues are hydrolyzed (such as succinyl-Leu-Tyr-|-NHMec, and Leu-Tyr-Leu-|-Tyr-Trp, in which cleavage of the -Tyr-|-Leu- and -Tyr-|-Trp bonds also occurs).. In terms of biological role, cleaves peptides in various proteins in a process that requires ATP hydrolysis. Has a chymotrypsin-like activity. Plays a major role in the degradation of misfolded proteins. In Streptomyces avermitilis (strain ATCC 31267 / DSM 46492 / JCM 5070 / NBRC 14893 / NCIMB 12804 / NRRL 8165 / MA-4680), this protein is ATP-dependent Clp protease proteolytic subunit 2.